We begin with the raw amino-acid sequence, 802 residues long: Oligophrenin-1 (802 aa).

Residues 265 to 368 (QPTIEGYLYT…WMEAMDGKEP (104 aa)) enclose the PH domain. The 185-residue stretch at 380–564 (MELNEVGFKF…ILIEHFGKIY (185 aa)) folds into the Rho-GAP domain. Disordered regions lie at residues 606-665 (SLDE…SEPC) and 681-802 (GTKA…GDES). A compositionally biased stretch (polar residues) spans 617–627 (QTPNGTITSNL). A compositionally biased stretch (basic and acidic residues) spans 716–732 (HHKEGDTDGFSKVRPPG).

Interacts with HOMER1. Interacts with AMPA receptor complexes. Interacts with SH3GL2 (endophilin-A1). Interacts (via C-terminus) with NR1D1.

It is found in the postsynapse. The protein localises to the presynapse. It localises to the cell projection. The protein resides in the axon. Its subcellular location is the dendritic spine. It is found in the dendrite. The protein localises to the cytoplasm. Functionally, stimulates GTP hydrolysis of members of the Rho family. Its action on RHOA activity and signaling is implicated in growth and stabilization of dendritic spines, and therefore in synaptic function. Critical for the stabilization of AMPA receptors at postsynaptic sites. Critical for the regulation of synaptic vesicle endocytosis at presynaptic terminals. Required for the localization of NR1D1 to dendrites, can suppress its repressor activity and protect it from proteasomal degradation. The sequence is that of Oligophrenin-1 (Ophn1) from Mus musculus (Mouse).